A 372-amino-acid chain; its full sequence is tRNA-specific 2-thiouridylase MnmA (372 aa).

ATP contacts are provided by residues 16–23 (GMSGGVDS) and methionine 42. The tract at residues 102 to 104 (NPD) is interaction with target base in tRNA. The active-site Nucleophile is the cysteine 107. Cysteine 107 and cysteine 205 form a disulfide bridge. Glycine 132 provides a ligand contact to ATP. Positions 155–157 (KDQ) are interaction with tRNA. Catalysis depends on cysteine 205, which acts as the Cysteine persulfide intermediate. Residues 317–318 (RY) form an interaction with tRNA region.

It belongs to the MnmA/TRMU family.

The protein localises to the cytoplasm. The enzyme catalyses S-sulfanyl-L-cysteinyl-[protein] + uridine(34) in tRNA + AH2 + ATP = 2-thiouridine(34) in tRNA + L-cysteinyl-[protein] + A + AMP + diphosphate + H(+). In terms of biological role, catalyzes the 2-thiolation of uridine at the wobble position (U34) of tRNA, leading to the formation of s(2)U34. In Shewanella frigidimarina (strain NCIMB 400), this protein is tRNA-specific 2-thiouridylase MnmA.